The primary structure comprises 837 residues: V-type proton ATPase 116 kDa subunit a 1 (837 aa).

The Cytoplasmic segment spans residues 1–388 (MGELFRSEEM…DAYGIGTYRE (388 aa)). Phosphothreonine is present on residues T250 and T360. Residue Y364 is modified to Phosphotyrosine. A helical transmembrane segment spans residues 389-407 (INPAPYTIITFPFLFAVMF). The Vacuolar segment spans residues 408–409 (GD). Residues 410-426 (FGHGILMTLFAVWMVLR) form a helical membrane-spanning segment. At 427-441 (ESRILSQKNENEMFS) the chain is on the cytoplasmic side. A helical membrane pass occupies residues 442–471 (TVFSGRYIILLMGVFSMYTGLIYNDCFSKS). Residues 472 to 534 (LNIFGSSWSV…ATNKLTFLNS (63 aa)) are Vacuolar-facing. Residues 535–554 (FKMKMSVILGIIHMLFGVSL) form a helical membrane-spanning segment. The Cytoplasmic segment spans residues 555 to 572 (SLFNHIYFKKPLNIYFGF). Residues 573-593 (IPEIIFMTSLFGYLVILIFYK) traverse the membrane as a helical segment. The Vacuolar segment spans residues 594–638 (WTAYDAHTSENAPSLLIHFINMFLFSYPESGYSMLYSGQKGIQCF). A helical membrane pass occupies residues 639 to 658 (LVVVALLCVPWMLLFKPLVL). The Cytoplasmic portion of the chain corresponds to 659 to 724 (RRQYLRRKHL…ATMVHQAIHT (66 aa)). The chain crosses the membrane as a helical span at residues 725–749 (IEYCLGCISNTASYLRLWALSLAHA). Residues 750–770 (QLSEVLWTMVIHIGLSVKSLA) are Vacuolar-facing. A helical transmembrane segment spans residues 771-809 (GGLVLFFFFTAFATLTVAILLIMEGLSAFLHALRLHWVE). Over 810 to 837 (FQNKFYSGTGFKFLPFSFEHIREGKFGE) the chain is Cytoplasmic.

Belongs to the V-ATPase 116 kDa subunit family. V-ATPase is a heteromultimeric enzyme made up of two complexes: the ATP-hydrolytic V1 complex and the proton translocation V0 complex. The V1 complex consists of three catalytic AB heterodimers that form a heterohexamer, three peripheral stalks each consisting of EG heterodimers, one central rotor including subunits D and F, and the regulatory subunits C and H. The proton translocation complex V0 consists of the proton transport subunit a, a ring of proteolipid subunits c9c'', rotary subunit d, subunits e and f, and the accessory subunits ATP6AP1/Ac45 and ATP6AP2/PRR. Interacts with SPAAR.

It localises to the cytoplasmic vesicle. Its subcellular location is the clathrin-coated vesicle membrane. It is found in the secretory vesicle. The protein resides in the synaptic vesicle membrane. The protein localises to the melanosome. Its function is as follows. Subunit of the V0 complex of vacuolar(H+)-ATPase (V-ATPase), a multisubunit enzyme composed of a peripheral complex (V1) that hydrolyzes ATP and a membrane integral complex (V0) that translocates protons. V-ATPase is responsible for the acidification of various organelles, such as lysosomes, endosomes, the trans-Golgi network, and secretory granules, including synaptic vesicles. In certain cell types, can be exported to the plasma membrane, where it is involved in the acidification of the extracellular environment. Required for assembly and activity of the vacuolar ATPase. Through its action on compartment acidification, plays an essential role in neuronal development in terms of integrity and connectivity of neurons. The protein is V-type proton ATPase 116 kDa subunit a 1 (ATP6V0A1) of Pongo abelii (Sumatran orangutan).